The chain runs to 272 residues: 3-methyl-2-oxobutanoate hydroxymethyltransferase (272 aa).

Mg(2+) contacts are provided by Asp-43 and Asp-82. 3-methyl-2-oxobutanoate-binding positions include 43–44 (DS), Asp-82, and Lys-112. Position 114 (Glu-114) interacts with Mg(2+). The active-site Proton acceptor is Glu-179.

It belongs to the PanB family. In terms of assembly, homodecamer; pentamer of dimers. Mg(2+) is required as a cofactor.

The protein resides in the cytoplasm. The catalysed reaction is 3-methyl-2-oxobutanoate + (6R)-5,10-methylene-5,6,7,8-tetrahydrofolate + H2O = 2-dehydropantoate + (6S)-5,6,7,8-tetrahydrofolate. The protein operates within cofactor biosynthesis; (R)-pantothenate biosynthesis; (R)-pantoate from 3-methyl-2-oxobutanoate: step 1/2. Functionally, catalyzes the reversible reaction in which hydroxymethyl group from 5,10-methylenetetrahydrofolate is transferred onto alpha-ketoisovalerate to form ketopantoate. The sequence is that of 3-methyl-2-oxobutanoate hydroxymethyltransferase from Staphylococcus aureus (strain Newman).